We begin with the raw amino-acid sequence, 1068 residues long: Target of Nesh-SH3 (1068 aa).

Positions 1–21 (MLSSLGCLLLCGSITLALGNA) are cleaved as a signal peptide. Asn-37 carries N-linked (GlcNAc...) asparagine glycosylation. A Fibronectin type-III 1 domain is found at 116-214 (KPLQLVVGTL…KIFNHKTVVG (99 aa)). 2 disordered regions span residues 315 to 351 (SKTPEVEKISARPTTVTPETVPRSTKPTTSSALDVSE) and 384 to 811 (VFSS…SITD). A compositionally biased stretch (low complexity) spans 326-339 (RPTTVTPETVPRST). The span at 340–351 (KPTTSSALDVSE) shows a compositional bias: polar residues. The span at 447–462 (QPTTPAPQQTTSIPST) shows a compositional bias: low complexity. Positions 463–473 (PKRRPRPKPPR) are enriched in basic residues. Over residues 482 to 499 (AGTITPKISKSPEPTWTT) the composition is skewed to polar residues. Residues 532–544 (RAPPKPKTSPRPR) show a composition bias toward pro residues. The span at 562-574 (PKTSPSPEVSYTT) shows a compositional bias: polar residues. 2 stretches are compositionally biased toward low complexity: residues 603 to 631 (IPFIPMISPSPSQEELQTTLEETDQSTQE) and 737 to 750 (PPLRSTPRPTGTPL). Positions 802–811 (PDNSPCSITD) are enriched in polar residues. The region spanning 833–926 (PPTNLTVVTV…NTVAFSTESA (94 aa)) is the Fibronectin type-III 2 domain.

Probably interacts with ABI3. As to expression, expressed in brain, heart, lung, liver, pancreas kidney and placenta.

The protein localises to the secreted. This is Target of Nesh-SH3 from Homo sapiens (Human).